We begin with the raw amino-acid sequence, 86 residues long: Anti-adapter protein IraP (86 aa).

Positions 1-36 (MKNLIAELLLKLAQKEEESKELCAQVEALEIIVTAM) form a coiled coil.

This sequence belongs to the IraP family. Interacts with RssB.

It localises to the cytoplasm. Its function is as follows. Inhibits RpoS proteolysis by regulating RssB activity, thereby increasing the stability of the sigma stress factor RpoS especially during phosphate starvation, but also in stationary phase and during nitrogen starvation. Its effect on RpoS stability is due to its interaction with RssB, which probably blocks the interaction of RssB with RpoS, and the consequent delivery of the RssB-RpoS complex to the ClpXP protein degradation pathway. The polypeptide is Anti-adapter protein IraP (Shigella boydii serotype 18 (strain CDC 3083-94 / BS512)).